Consider the following 461-residue polypeptide: Polycomb group protein FIE1 (461 aa).

Residues 1–11 show a composition bias toward basic residues; sequence MPPSKARRKRS. The tract at residues 1-56 is disordered; it reads MPPSKARRKRSLRDITATVATGTVANSKPGSSSTNEGKQQDKKKEGPQEPDIPPLP. A compositionally biased stretch (polar residues) spans 18–37; it reads TVATGTVANSKPGSSSTNEG. Basic and acidic residues predominate over residues 38 to 47; that stretch reads KQQDKKKEGP. WD repeat units lie at residues 143 to 186, 189 to 229, 235 to 275, 301 to 338, 351 to 391, and 398 to 437; these read DKDE…LDKS, GHGG…CILV, GHRH…IYVE, VHSD…RRPG, PKCS…PVLI, and ECKS…ASSS. Residues 429 to 461 form a disordered region; sequence EVDPAASSSKPDQAAAPAAGVGAGAGADADADA. Positions 432–448 are enriched in low complexity; it reads PAASSSKPDQAAAPAAG.

It belongs to the WD repeat ESC family. In terms of tissue distribution, specifically expressed in kernel starting from 6 days after pollination.

It is found in the nucleus. Polycomb group (PcG) protein. PcG proteins act by forming multiprotein complexes, which are required to maintain the transcriptionally repressive state of homeotic genes throughout development. PcG proteins are not required to initiate repression, but to maintain it during later stages of development. They probably act via the methylation of histones, rendering chromatin heritably changed in its expressibility. The sequence is that of Polycomb group protein FIE1 (FIE1) from Zea mays (Maize).